The primary structure comprises 158 residues: Transcription antitermination protein NusB (158 aa).

The protein belongs to the NusB family.

In terms of biological role, involved in transcription antitermination. Required for transcription of ribosomal RNA (rRNA) genes. Binds specifically to the boxA antiterminator sequence of the ribosomal RNA (rrn) operons. This chain is Transcription antitermination protein NusB, found in Bartonella henselae (strain ATCC 49882 / DSM 28221 / CCUG 30454 / Houston 1) (Rochalimaea henselae).